A 725-amino-acid polypeptide reads, in one-letter code: Glutamine-dependent NAD(+) synthetase (725 aa).

In terms of domain architecture, CN hydrolase spans valine 5–leucine 275. Glutamate 45 (proton acceptor; for glutaminase activity) is an active-site residue. Lysine 114 acts as the For glutaminase activity in catalysis. Cysteine 175 (nucleophile; for glutaminase activity) is an active-site residue. The tract at residues tyrosine 325–isoleucine 706 is ligase. Proline 355–serine 362 serves as a coordination point for ATP. Serine 357 is an active-site residue.

In the C-terminal section; belongs to the NAD synthetase family. As to quaternary structure, homohexamer.

It catalyses the reaction deamido-NAD(+) + L-glutamine + ATP + H2O = L-glutamate + AMP + diphosphate + NAD(+) + H(+). It functions in the pathway cofactor biosynthesis; NAD(+) biosynthesis; NAD(+) from deamido-NAD(+) (L-Gln route): step 1/1. Catalyzes the final step of the nicotinamide adenine dinucleotide (NAD) de novo synthesis pathway, the ATP-dependent amidation of deamido-NAD using L-glutamine as a nitrogen source. The polypeptide is Glutamine-dependent NAD(+) synthetase (Nadsyn1) (Rattus norvegicus (Rat)).